The chain runs to 713 residues: Calpain-1 catalytic subunit (713 aa).

The Calpain catalytic domain maps to 55–354 (LFQDDAFPPV…FTKLEICNLT (300 aa)). Residues cysteine 115, histidine 272, and asparagine 296 contribute to the active site. A Phosphothreonine modification is found at threonine 354. The interval 355-525 (PDALKSRTLR…KKAGTQELDD (171 aa)) is domain III. The interval 526-541 (QIQANLPDEKVLSEEE) is linker. The tract at residues 542 to 712 (IDDNFKTLFS…LFKWLQLTMF (171 aa)) is domain IV. 4 consecutive EF-hand domains span residues 557–575 (DMEI…IISK), 584–609 (FSLE…LVEF), 614–649 (NRIR…AGFK), and 679–713 (VRLE…TMFA). Residues aspartate 597, aspartate 599, asparagine 601, lysine 603, glutamate 608, aspartate 627, aspartate 629, serine 631, serine 633, and glutamate 638 each coordinate Ca(2+).

It belongs to the peptidase C2 family. Forms a heterodimer with a small (regulatory) subunit CAPNS1. The cofactor is Ca(2+). Post-translationally, undergoes calcium-induced successive autoproteolytic cleavages that generate a membrane-bound 78 kDa active form and an intracellular 75 kDa active form. Calpastatin reduces with high efficiency the transition from 78 kDa to 75 kDa calpain forms.

The protein resides in the cytoplasm. It localises to the cell membrane. The enzyme catalyses Broad endopeptidase specificity.. With respect to regulation, activated by micromolar concentrations of calcium and inhibited by calpastatin. In terms of biological role, calcium-regulated non-lysosomal thiol-protease which catalyzes limited proteolysis of substrates involved in cytoskeletal remodeling and signal transduction. Proteolytically cleaves CTBP1 at 'Asn-364', 'Gly-377' and 'His-399'. Cleaves and activates caspase-7 (CASP7). The sequence is that of Calpain-1 catalytic subunit from Rattus norvegicus (Rat).